A 43-amino-acid polypeptide reads, in one-letter code: METATLIAIFISCSLVSFTGYALYTAFGQPSKELRDPFEEHED.

Residues 5–27 form a helical membrane-spanning segment; the sequence is TLIAIFISCSLVSFTGYALYTAF.

This sequence belongs to the PsbN family.

It is found in the plastid. The protein localises to the chloroplast thylakoid membrane. Functionally, may play a role in photosystem I and II biogenesis. The polypeptide is Protein PsbN (Lopidium concinnum (Moss)).